The sequence spans 351 residues: Glucan endo-1,3-beta-glucosidase (351 aa).

Residues 1 to 32 (MALWYLFNKRSLGAAVLILVGLLMCNIQITGA) form the signal peptide. Glutamine 33 is subject to Pyrrolidone carboxylic acid. Asparagine 79 and asparagine 99 each carry an N-linked (GlcNAc...) asparagine glycan. The active-site Proton donor is the glutamate 128. Asparagine 235 carries N-linked (GlcNAc...) asparagine glycosylation. The active-site Nucleophile is the glutamate 268.

Belongs to the glycosyl hydrolase 17 family. Glycosylated. Post-translationally, the N-terminus is blocked.

It localises to the secreted. The protein localises to the extracellular space. It is found in the extracellular matrix. It carries out the reaction Hydrolysis of (1-&gt;3)-beta-D-glucosidic linkages in (1-&gt;3)-beta-D-glucans.. Its function is as follows. Implicated in the defense of plants against pathogens. In Nicotiana tabacum (Common tobacco), this protein is Glucan endo-1,3-beta-glucosidase (SP41B).